The following is a 427-amino-acid chain: 3-phosphoshikimate 1-carboxyvinyltransferase (427 aa).

3 residues coordinate 3-phosphoshikimate: lysine 22, serine 23, and arginine 27. Position 22 (lysine 22) interacts with phosphoenolpyruvate. Glycine 96 and arginine 124 together coordinate phosphoenolpyruvate. The 3-phosphoshikimate site is built by serine 170, serine 171, glutamine 172, serine 198, aspartate 314, asparagine 337, and lysine 341. Glutamine 172 is a phosphoenolpyruvate binding site. The active-site Proton acceptor is the aspartate 314. Phosphoenolpyruvate is bound by residues arginine 345, arginine 387, and lysine 412.

The protein belongs to the EPSP synthase family. Monomer.

Its subcellular location is the cytoplasm. The enzyme catalyses 3-phosphoshikimate + phosphoenolpyruvate = 5-O-(1-carboxyvinyl)-3-phosphoshikimate + phosphate. Its pathway is metabolic intermediate biosynthesis; chorismate biosynthesis; chorismate from D-erythrose 4-phosphate and phosphoenolpyruvate: step 6/7. In terms of biological role, catalyzes the transfer of the enolpyruvyl moiety of phosphoenolpyruvate (PEP) to the 5-hydroxyl of shikimate-3-phosphate (S3P) to produce enolpyruvyl shikimate-3-phosphate and inorganic phosphate. The polypeptide is 3-phosphoshikimate 1-carboxyvinyltransferase (Tolumonas auensis (strain DSM 9187 / NBRC 110442 / TA 4)).